A 220-amino-acid chain; its full sequence is Probable septum site-determining protein MinC (220 aa).

It belongs to the MinC family. In terms of assembly, interacts with MinD and FtsZ.

In terms of biological role, cell division inhibitor that blocks the formation of polar Z ring septums. Rapidly oscillates between the poles of the cell to destabilize FtsZ filaments that have formed before they mature into polar Z rings. Prevents FtsZ polymerization. This Prochlorococcus marinus subsp. pastoris (strain CCMP1986 / NIES-2087 / MED4) protein is Probable septum site-determining protein MinC.